The sequence spans 199 residues: Tropomyosin-1 (199 aa).

The stretch at 1–199 (MDKIREKLSN…DEIAASLENL (199 aa)) forms a coiled coil. Glycyl lysine isopeptide (Lys-Gly) (interchain with G-Cter in ubiquitin) cross-links involve residues K39 and K59. Disordered stretches follow at residues 59-81 (KLEAGLSDSKQTEQDNVEKENQI) and 102-147 (LAES…TEKL). Basic and acidic residues-rich tracts occupy residues 68 to 80 (KQTEQDNVEKENQ) and 102 to 114 (LAESKQLSEDSHH). Over residues 115–126 (LQSNNDNFSKKN) the composition is skewed to polar residues. Residues 136–147 (SDTKLKETTEKL) are compositionally biased toward basic and acidic residues. A Glycyl lysine isopeptide (Lys-Gly) (interchain with G-Cter in ubiquitin) cross-link involves residue K187. S195 bears the Phosphoserine mark.

As to quaternary structure, homodimer.

It is found in the cytoplasm. The protein localises to the cytoskeleton. This chain is Tropomyosin-1 (TPM1), found in Saccharomyces cerevisiae (strain ATCC 204508 / S288c) (Baker's yeast).